The following is a 626-amino-acid chain: MESKTYYIFRNPDNPNYPVYHIINEKHVFKYTDFKIKEIIQVEPDYSKPDLKFTEYEDGIYATNYINEIAKISLLDVNNIDKLLFNFSYESFGPTYRLYSRFLSDNRLDLCDYLIEKNIKLTQFADYCIFNFMVNPSKESLMYIIDHNDFFQISWETIFKSIIPFTRDGEITDYLITLMDNINYKIDYDDIIKNVITNSYTLDIKNIEPIIEKTNINLYDVFKYACSRGKLHIIDYLLDKRIEYDFYELIKCDISTRTLNFFIEKGYYLDGIAIDIIINSEPHNIYKMVKFLIDQKYLTQDLITKQLLDTIIKTNINNLRLFINDFDVVDLVDLDMIIVMAIEFNSMELINWCMNNGININKYMSIIMKKCRPTIISGLIELGAQIPNDKSYYDPTIIENYCMGSDCISYLKTIIEKEFDTAENIIHNIIENRPHIEILKYLLTEVQTEHITIPKLTNVIIRNYYYDNDYCPEYYEDLIKSGIQFDIEQQTIIQIIEKKIVDVQGVIFSNCELSSNLKILFVTIMTDNIDILEFLLEINKYNQDYLQWALIFSSNNITILEYIINNTNVNPISFKQEMSTMAGHNNYYSIDYLRLNGFYTNNDVPTDSKLADFMNEIGIDIFNPNF.

ANK repeat units follow at residues 217-246, 333-362, 421-451, 515-545, and 547-571; these read NLYD…EYDF, DLDM…NINK, TAEN…TEHI, SNLK…NQDY, and QWAL…NVNP.

The sequence is that of Putative ankyrin repeat protein L768 from Acanthamoeba polyphaga mimivirus (APMV).